The primary structure comprises 118 residues: Small ribosomal subunit protein uS12cz/uS12cy (118 aa).

This sequence belongs to the universal ribosomal protein uS12 family. In terms of assembly, part of the 30S ribosomal subunit.

The protein resides in the plastid. It localises to the chloroplast. Functionally, with S4 and S5 plays an important role in translational accuracy. Located at the interface of the 30S and 50S subunits. The sequence is that of Small ribosomal subunit protein uS12cz/uS12cy (rps12-A) from Helianthus annuus (Common sunflower).